The sequence spans 360 residues: Histidinol-phosphate aminotransferase (360 aa).

Position 221 is an N6-(pyridoxal phosphate)lysine (Lys221).

Belongs to the class-II pyridoxal-phosphate-dependent aminotransferase family. Histidinol-phosphate aminotransferase subfamily. As to quaternary structure, homodimer. The cofactor is pyridoxal 5'-phosphate.

The catalysed reaction is L-histidinol phosphate + 2-oxoglutarate = 3-(imidazol-4-yl)-2-oxopropyl phosphate + L-glutamate. Its pathway is amino-acid biosynthesis; L-histidine biosynthesis; L-histidine from 5-phospho-alpha-D-ribose 1-diphosphate: step 7/9. This Desulfitobacterium hafniense (strain DSM 10664 / DCB-2) protein is Histidinol-phosphate aminotransferase.